The following is a 259-amino-acid chain: Gasdermin bGSDM (259 aa).

The S-palmitoyl cysteine moiety is linked to residue C3. The next 4 beta stranded transmembrane spans lie at 70–86 (FQFR…AASV), 98–116 (SGSF…IQLS), 162–179 (GIRI…DLSA), and 187–203 (AKAK…SYAF). The segment at 244-259 (PFAFIGDDAFVDLPES) is C-terminal region.

This sequence belongs to the bacterial gasdermin family. In terms of assembly, monomer in solution. As to quaternary structure, forms large, homooligomeric ring-shaped pores when inserted in membranes. Palmitoylation helps stabilize the inactive state; may self palmitoylate. Palmitoylation plays a significant role in pore formation.

Its subcellular location is the cytoplasm. It localises to the cell inner membrane. With respect to regulation, the full-length protein before cleavage is inactive: intramolecular interactions between the N-terminal domain and the C-terminal region as well as the lipid modification, mediate autoinhibition. The pyroptosis-like-inducing activity is carried by the released N-terminal domain (Gasdermin bGSDM, N-terminus). Functionally, precursor of a pore-forming protein involved in defense against bacteriophages. Expression of bGSDM and the neighboring protease gene (Ga0098714_109514) is toxic in E.coli on solid medium. Cleavage of this precursor by its dedicated protease releases the active moiety (gasdermin bGSDM, N-terminus) which inserts into membranes, forming pores and triggering cell death. Its function is as follows. Pore-forming protein that causes membrane permeabilization via a pyroptosis-like activity. Makes ring-like pores when released. This Bradyrhizobium tropiciagri protein is Gasdermin bGSDM.